The sequence spans 174 residues: U-stichotoxin-Hau2a (174 aa).

Residues 1 to 18 (MKPIFIVALLFSTCLVNA) form the signal peptide. A propeptide spanning residues 19–33 (KPSINDADIKREPEP) is cleaved from the precursor. A Hydroxyproline modification is found at P39. 2 disulfide bridges follow: C40-C51 and C43-C58. Positions 61-67 (RKREPEP) are excised as a propeptide. Position 73 is a hydroxyproline (P73). 2 disulfide bridges follow: C74–C85 and C77–C92. The propeptide occupies 95–101 (RKREPEP). At P107 the chain carries Hydroxyproline. 2 disulfides stabilise this stretch: C108/C119 and C111/C126. Residues 129 to 135 (RKREPEP) constitute a propeptide that is removed on maturation. At P141 the chain carries Hydroxyproline. Intrachain disulfides connect C142/C153 and C145/C160. Residues 163 to 174 (RKREPENQDLWS) constitute a propeptide that is removed on maturation.

Belongs to the sea anemone BBH family.

Its subcellular location is the secreted. The protein resides in the nematocyst. Functionally, neurotoxin that paralyzes freshwater crabs at high concentration. The polypeptide is U-stichotoxin-Hau2a (Heteractis aurora (Banded sea anemone)).